The sequence spans 427 residues: ATP-dependent RNA helicase DDX39A (427 aa).

Residues 1–19 (MAEQDVENDLLDYDEEEEP) are compositionally biased toward acidic residues. Positions 1–34 (MAEQDVENDLLDYDEEEEPQAPQESTPAPPKKDI) are disordered. Ala2 is subject to N-acetylalanine. Lys31 participates in a covalent cross-link: Glycyl lysine isopeptide (Lys-Gly) (interchain with G-Cter in SUMO2). Lys35 carries the N6-acetyllysine; alternate modification. Lys35 participates in a covalent cross-link: Glycyl lysine isopeptide (Lys-Gly) (interchain with G-Cter in SUMO2); alternate. The residue at position 37 (Ser37) is a Phosphoserine. A Q motif motif is present at residues 44-72 (SGFRDFLLKPELLRAIVDCGFEHPSEVQH). Positions 75-248 (IPQAILGMDV…RKFMQDPMEV (174 aa)) constitute a Helicase ATP-binding domain. 88-95 (AKSGMGKT) is a binding site for ATP. Residues Lys154 and Lys162 each participate in a glycyl lysine isopeptide (Lys-Gly) (interchain with G-Cter in SUMO2) cross-link. Thr171 bears the Phosphothreonine mark. The short motif at 195-198 (DECD) is the DECD box element. Residues Lys240 and Lys255 each participate in a glycyl lysine isopeptide (Lys-Gly) (interchain with G-Cter in SUMO2) cross-link. A Helicase C-terminal domain is found at 260 to 421 (GLQQYYVKLK…ELPEEIDIST (162 aa)). At Ser426 the chain carries Phosphoserine.

It belongs to the DEAD box helicase family. DECD subfamily. In terms of assembly, binds ALYREF/THOC4 and DDX39B/BAT1. Interacts with the apo-AREX complex component SARNP. Interacts with MX1. Interacts with MCM3AP isoform GANP. Interacts with ECD. Interacts with PHAX; this interaction stimulates PHAX RNA binding activity. (Microbial infection) Interacts with human cytomegalovirus/HHV-5 protein UL69. Post-translationally, SUMOylated by RANBP2; SUMOylation modification affects its ability to bind RNA. Detected in testis, and at lower levels in brain, kidney, lung, thymus, spleen and salivary gland.

The protein resides in the nucleus. It is found in the cytoplasm. It carries out the reaction ATP + H2O = ADP + phosphate + H(+). In terms of biological role, helicase that plays an essential role in mRNA export and is involved in multiple steps in RNA metabolism including alternative splicing. Regulates nuclear mRNA export to the cytoplasm through association with ECD. Also involved in spliceosomal uridine-rich small nuclear RNA (U snRNA) export by stimulating the RNA binding of adapter PHAX. Plays a role in the negative regulation of type I IFN production by increasing the nuclear retention of antiviral transcripts and thus reducing their protein expression. Independently of the interferon pathway, plays an antiviral role against alphaviruses by binding to a 5' conserved sequence element in the viral genomic RNA. In Homo sapiens (Human), this protein is ATP-dependent RNA helicase DDX39A (DDX39A).